We begin with the raw amino-acid sequence, 470 residues long: ATP synthase subunit beta 2 (470 aa).

155-162 (GGAGVGKT) is an ATP binding site.

It belongs to the ATPase alpha/beta chains family. In terms of assembly, F-type ATPases have 2 components, CF(1) - the catalytic core - and CF(0) - the membrane proton channel. CF(1) has five subunits: alpha(3), beta(3), gamma(1), delta(1), epsilon(1). CF(0) has three main subunits: a(1), b(2) and c(9-12). The alpha and beta chains form an alternating ring which encloses part of the gamma chain. CF(1) is attached to CF(0) by a central stalk formed by the gamma and epsilon chains, while a peripheral stalk is formed by the delta and b chains.

Its subcellular location is the cell inner membrane. It catalyses the reaction ATP + H2O + 4 H(+)(in) = ADP + phosphate + 5 H(+)(out). Functionally, produces ATP from ADP in the presence of a proton gradient across the membrane. The catalytic sites are hosted primarily by the beta subunits. The chain is ATP synthase subunit beta 2 from Nitrosospira multiformis (strain ATCC 25196 / NCIMB 11849 / C 71).